The sequence spans 424 residues: Light-independent protochlorophyllide reductase subunit N (424 aa).

Cysteine 16, cysteine 41, and cysteine 102 together coordinate [4Fe-4S] cluster.

It belongs to the BchN/ChlN family. Protochlorophyllide reductase is composed of three subunits; ChlL, ChlN and ChlB. Forms a heterotetramer of two ChlB and two ChlN subunits. [4Fe-4S] cluster serves as cofactor.

It catalyses the reaction chlorophyllide a + oxidized 2[4Fe-4S]-[ferredoxin] + 2 ADP + 2 phosphate = protochlorophyllide a + reduced 2[4Fe-4S]-[ferredoxin] + 2 ATP + 2 H2O. Its pathway is porphyrin-containing compound metabolism; chlorophyll biosynthesis (light-independent). Functionally, component of the dark-operative protochlorophyllide reductase (DPOR) that uses Mg-ATP and reduced ferredoxin to reduce ring D of protochlorophyllide (Pchlide) to form chlorophyllide a (Chlide). This reaction is light-independent. The NB-protein (ChlN-ChlB) is the catalytic component of the complex. This is Light-independent protochlorophyllide reductase subunit N from Synechococcus sp. (strain WH7803).